The primary structure comprises 106 residues: Large ribosomal subunit protein uL24 (106 aa).

It belongs to the universal ribosomal protein uL24 family. In terms of assembly, part of the 50S ribosomal subunit.

One of two assembly initiator proteins, it binds directly to the 5'-end of the 23S rRNA, where it nucleates assembly of the 50S subunit. In terms of biological role, one of the proteins that surrounds the polypeptide exit tunnel on the outside of the subunit. In Blochmanniella floridana, this protein is Large ribosomal subunit protein uL24.